A 914-amino-acid chain; its full sequence is Protein translocase subunit SecA (914 aa).

Residues glutamine 87, glycine 105–threonine 109, and aspartate 500 contribute to the ATP site. Positions 898, 900, 909, and 910 each coordinate Zn(2+).

It belongs to the SecA family. As to quaternary structure, monomer and homodimer. Part of the essential Sec protein translocation apparatus which comprises SecA, SecYEG and auxiliary proteins SecDF-YajC and YidC. The cofactor is Zn(2+).

It localises to the cell inner membrane. It is found in the cytoplasm. It catalyses the reaction ATP + H2O + cellular proteinSide 1 = ADP + phosphate + cellular proteinSide 2.. Its function is as follows. Part of the Sec protein translocase complex. Interacts with the SecYEG preprotein conducting channel. Has a central role in coupling the hydrolysis of ATP to the transfer of proteins into and across the cell membrane, serving as an ATP-driven molecular motor driving the stepwise translocation of polypeptide chains across the membrane. The polypeptide is Protein translocase subunit SecA (Acidithiobacillus ferrooxidans (strain ATCC 23270 / DSM 14882 / CIP 104768 / NCIMB 8455) (Ferrobacillus ferrooxidans (strain ATCC 23270))).